Consider the following 143-residue polypeptide: Large ribosomal subunit protein uL15 (143 aa).

The segment at 1–52 (MELNTIQPADGAKHYKRRVGRGIGSGLGKTAGRGHKGQKSRSGGFHKVGFEG) is disordered. A compositionally biased stretch (gly residues) spans 21–31 (RGIGSGLGKTA).

It belongs to the universal ribosomal protein uL15 family. In terms of assembly, part of the 50S ribosomal subunit.

Its function is as follows. Binds to the 23S rRNA. In Herminiimonas arsenicoxydans, this protein is Large ribosomal subunit protein uL15.